Reading from the N-terminus, the 416-residue chain is Probable pectate lyase 8 (416 aa).

The signal sequence occupies residues 1–24; sequence MAVTKLILFASALLLTALFIGVNA. N-linked (GlcNAc...) asparagine glycosylation is found at Asn-23, Asn-28, and Asn-52. Ca(2+)-binding residues include Asp-214, Asp-238, and Asp-242. The active site involves Arg-294.

The protein belongs to the polysaccharide lyase 1 family. Ca(2+) is required as a cofactor.

It catalyses the reaction Eliminative cleavage of (1-&gt;4)-alpha-D-galacturonan to give oligosaccharides with 4-deoxy-alpha-D-galact-4-enuronosyl groups at their non-reducing ends.. It participates in glycan metabolism; pectin degradation; 2-dehydro-3-deoxy-D-gluconate from pectin: step 2/5. This chain is Probable pectate lyase 8, found in Arabidopsis thaliana (Mouse-ear cress).